Here is a 120-residue protein sequence, read N- to C-terminus: ATP-dependent Clp protease adapter protein ClpS (120 aa).

The segment at 1-25 (MHARSEIRLTFNQDRPQSNEDDGSG) is disordered.

The protein belongs to the ClpS family. In terms of assembly, binds to the N-terminal domain of the chaperone ClpA.

Involved in the modulation of the specificity of the ClpAP-mediated ATP-dependent protein degradation. The sequence is that of ATP-dependent Clp protease adapter protein ClpS from Pseudomonas putida (strain W619).